The primary structure comprises 341 residues: tRNA N6-adenosine threonylcarbamoyltransferase (341 aa).

Histidine 117 and histidine 121 together coordinate Fe cation. Substrate is bound by residues valine 139 to glycine 143, aspartate 172, glycine 185, aspartate 189, and asparagine 278. Aspartate 307 contacts Fe cation.

The protein belongs to the KAE1 / TsaD family. Fe(2+) is required as a cofactor.

The protein resides in the cytoplasm. It carries out the reaction L-threonylcarbamoyladenylate + adenosine(37) in tRNA = N(6)-L-threonylcarbamoyladenosine(37) in tRNA + AMP + H(+). Its function is as follows. Required for the formation of a threonylcarbamoyl group on adenosine at position 37 (t(6)A37) in tRNAs that read codons beginning with adenine. Is involved in the transfer of the threonylcarbamoyl moiety of threonylcarbamoyl-AMP (TC-AMP) to the N6 group of A37, together with TsaE and TsaB. TsaD likely plays a direct catalytic role in this reaction. This chain is tRNA N6-adenosine threonylcarbamoyltransferase, found in Bacillus licheniformis (strain ATCC 14580 / DSM 13 / JCM 2505 / CCUG 7422 / NBRC 12200 / NCIMB 9375 / NCTC 10341 / NRRL NRS-1264 / Gibson 46).